Here is a 313-residue protein sequence, read N- to C-terminus: MHNVPIEYSDEVQNALSNGLPILGLESNVLSHGLPYPRNLEMFNACDEIIRSNGVVPALTFIRDKRICIGASPKDVELLTDDPKPIKVSARDIALCIAQGKVGATTASASIAICELAGIRIFSTAGLGGVHRDFSETLDVSADLHEISSRKTIVVSAGVKKFLDIPKTSEVLESLGVPVVGFGTSEFPAFYCRKSGAFLESFSQDPIEIATAAATHIETVGPGGFLILVAPSKEIALDDELVEKAVQRSLINASSQGVRGKAITKFVMRAIDSETDNRSQTANFDVMVEVVNAAAQIARSLKPEFFLDSVAKK.

Glutamate 26 acts as the Proton donor in catalysis. 2 residues coordinate substrate: lysine 87 and alanine 107. Aspartate 139 contacts Mn(2+). 141 to 143 lines the substrate pocket; it reads SAD. Lysine 160 acts as the Nucleophile in catalysis.

This sequence belongs to the pseudouridine-5'-phosphate glycosidase family. As to quaternary structure, homotrimer. Requires Mn(2+) as cofactor.

It carries out the reaction D-ribose 5-phosphate + uracil = psi-UMP + H2O. Its function is as follows. Catalyzes the reversible cleavage of pseudouridine 5'-phosphate (PsiMP) to ribose 5-phosphate and uracil. Functions biologically in the cleavage direction, as part of a pseudouridine degradation pathway. This chain is Pseudouridine-5'-phosphate glycosidase, found in Corynebacterium aurimucosum (strain ATCC 700975 / DSM 44827 / CIP 107346 / CN-1) (Corynebacterium nigricans).